Consider the following 172-residue polypeptide: Ribosome maturation factor RimM (172 aa).

The region spanning 97–170 (DDEYYYDEII…LITIDVLEGL (74 aa)) is the PRC barrel domain.

This sequence belongs to the RimM family. Binds ribosomal protein uS19.

It is found in the cytoplasm. In terms of biological role, an accessory protein needed during the final step in the assembly of 30S ribosomal subunit, possibly for assembly of the head region. Essential for efficient processing of 16S rRNA. May be needed both before and after RbfA during the maturation of 16S rRNA. It has affinity for free ribosomal 30S subunits but not for 70S ribosomes. The sequence is that of Ribosome maturation factor RimM from Leuconostoc citreum (strain KM20).